Reading from the N-terminus, the 263-residue chain is N-glycosylase/DNA lyase (263 aa).

Gln43, Ser71, and Trp82 together coordinate 8-oxoguanine. Residues 139 to 204 (RRYYFENMMG…EDVRIKAYTE (66 aa)) are helix-hairpin-helix. Lys164 serves as the catalytic Schiff-base intermediate with DNA. Phe168 and Pro194 together coordinate 8-oxoguanine. Asp196 is an active-site residue. Residues Asp230 and Trp234 each coordinate 8-oxoguanine.

Belongs to the archaeal N-glycosylase/DNA lyase (AGOG) family.

It carries out the reaction 2'-deoxyribonucleotide-(2'-deoxyribose 5'-phosphate)-2'-deoxyribonucleotide-DNA = a 3'-end 2'-deoxyribonucleotide-(2,3-dehydro-2,3-deoxyribose 5'-phosphate)-DNA + a 5'-end 5'-phospho-2'-deoxyribonucleoside-DNA + H(+). DNA repair enzyme that is part of the base excision repair (BER) pathway; protects from oxidative damage by removing the major product of DNA oxidation, 8-oxoguanine (GO), from single- and double-stranded DNA substrates. The sequence is that of N-glycosylase/DNA lyase from Thermococcus kodakarensis (strain ATCC BAA-918 / JCM 12380 / KOD1) (Pyrococcus kodakaraensis (strain KOD1)).